The primary structure comprises 294 residues: ADP-ribosyl-[dinitrogen reductase] glycohydrolase (294 aa).

ADP-D-ribose-binding positions include 100–102 (NTC), E121, H158, and Y212. Mn(2+) is bound by residues D243, D245, and T246.

The protein belongs to the ADP-ribosylglycohydrolase family. Monomer. The cofactor is Mn(2+).

The protein localises to the cytoplasm. The catalysed reaction is N(omega)-alpha-(ADP-D-ribosyl)-L-arginyl-[dinitrogen reductase] + H2O = L-arginyl-[dinitrogen reductase] + ADP-D-ribose. In terms of biological role, involved in the regulation of nitrogen fixation activity by the reversible ADP-ribosylation of one subunit of the homodimeric dinitrogenase reductase component of the nitrogenase enzyme complex. The ADP-ribosyltransferase (DraT) transfers the ADP-ribose group from NAD to dinitrogenase reductase. The ADP-ribose group is removed through the action of the ADP-ribosylglycohydrolase (DraG, this entry). The chain is ADP-ribosyl-[dinitrogen reductase] glycohydrolase from Rhodospirillum rubrum.